Consider the following 155-residue polypeptide: Gas vesicle protein K (155 aa).

This sequence belongs to the gas vesicle GvpK family.

It is found in the gas vesicle. Functionally, might be involved in nucleating gas vesicle formation. Gas vesicles (GV) are hollow, gas filled proteinaceous nanostructures. During planktonic growth they allow positioning of the organism at a favorable depth for light or nutrient acquisition. In Dolichospermum flosaquae (Anabaena flos-aquae), this protein is Gas vesicle protein K.